The primary structure comprises 118 residues: Putative pterin-4-alpha-carbinolamine dehydratase (118 aa).

It belongs to the pterin-4-alpha-carbinolamine dehydratase family.

The enzyme catalyses (4aS,6R)-4a-hydroxy-L-erythro-5,6,7,8-tetrahydrobiopterin = (6R)-L-erythro-6,7-dihydrobiopterin + H2O. The polypeptide is Putative pterin-4-alpha-carbinolamine dehydratase (Azotobacter vinelandii (strain DJ / ATCC BAA-1303)).